Consider the following 331-residue polypeptide: Aspartate carbamoyltransferase catalytic subunit (331 aa).

Carbamoyl phosphate is bound by residues Arg-55 and Thr-56. Lys-84 is a binding site for L-aspartate. The carbamoyl phosphate site is built by Arg-105, His-133, and Gln-136. Residues Arg-166 and Arg-229 each coordinate L-aspartate. Residues Leu-268 and Pro-269 each coordinate carbamoyl phosphate.

It belongs to the aspartate/ornithine carbamoyltransferase superfamily. ATCase family. In terms of assembly, heterododecamer (2C3:3R2) of six catalytic PyrB chains organized as two trimers (C3), and six regulatory PyrI chains organized as three dimers (R2).

It catalyses the reaction carbamoyl phosphate + L-aspartate = N-carbamoyl-L-aspartate + phosphate + H(+). Its pathway is pyrimidine metabolism; UMP biosynthesis via de novo pathway; (S)-dihydroorotate from bicarbonate: step 2/3. Catalyzes the condensation of carbamoyl phosphate and aspartate to form carbamoyl aspartate and inorganic phosphate, the committed step in the de novo pyrimidine nucleotide biosynthesis pathway. The polypeptide is Aspartate carbamoyltransferase catalytic subunit (Alkaliphilus oremlandii (strain OhILAs) (Clostridium oremlandii (strain OhILAs))).